Consider the following 613-residue polypeptide: Tetratricopeptide repeat protein 39A (613 aa).

TPR repeat units lie at residues 315–348, 505–538, and 546–579; these read AIFLFFAGRIEVIKGNIDAAIRRFEECCEAQQHW, CLVKLLKGLCLKYLGRVQEAEENFRSISANEKKI, and PNALLELALLLMEQDRNEEAIKLLESAKQNYKNY.

It belongs to the TTC39 family.

The polypeptide is Tetratricopeptide repeat protein 39A (TTC39A) (Homo sapiens (Human)).